Here is a 184-residue protein sequence, read N- to C-terminus: Ribosome-recycling factor (184 aa).

This sequence belongs to the RRF family.

It is found in the cytoplasm. Responsible for the release of ribosomes from messenger RNA at the termination of protein biosynthesis. May increase the efficiency of translation by recycling ribosomes from one round of translation to another. The polypeptide is Ribosome-recycling factor (Staphylococcus carnosus (strain TM300)).